The following is a 183-amino-acid chain: Intermembrane phospholipid transport system binding protein MlaD (183 aa).

The Cytoplasmic portion of the chain corresponds to 1-7; that stretch reads MQTKKNE. A helical; Signal-anchor for type II membrane protein transmembrane segment spans residues 8–28; it reads IWVGIFLLAALLAALFVCLKA. Residues 29-183 lie on the Periplasmic side of the membrane; that stretch reads ANVTSIRTEP…ETTEPVGTTK (155 aa). The tract at residues 39–116 is MCE/MlaD; it reads TYTLYATFDN…LGEQYLALNV (78 aa). The tract at residues 155–183 is disordered; that stretch reads KGDDNKNSGDAPAAAPGNNETTEPVGTTK. The segment covering 172–183 has biased composition (polar residues); sequence NNETTEPVGTTK.

Belongs to the MlaD family. In terms of assembly, the complex is composed of two ATP-binding proteins (MlaF), two transmembrane proteins (MlaE), two cytoplasmic solute-binding proteins (MlaB) and six periplasmic solute-binding proteins (MlaD).

Its subcellular location is the cell inner membrane. Functionally, part of the ABC transporter complex MlaFEDB, which is involved in a phospholipid transport pathway that maintains lipid asymmetry in the outer membrane by retrograde trafficking of phospholipids from the outer membrane to the inner membrane. MlaD functions in substrate binding with strong affinity for phospholipids and modulates ATP hydrolytic activity of the complex. The sequence is that of Intermembrane phospholipid transport system binding protein MlaD from Escherichia coli O157:H7.